Consider the following 477-residue polypeptide: Mitochondrial adenyl nucleotide antiporter SLC25A24 (477 aa).

Residues 1-173 (MLRWLRDFVL…RFWKHSTGID (173 aa)) form a regulatory N-terminal domain region. Topologically, residues 1-197 (MLRWLRDFVL…EKKSGQWWRQ (197 aa)) are mitochondrial intermembrane. 4 consecutive EF-hand domains span residues 19–54 (EQPT…LGIP), 55–88 (LGQD…KDHE), 86–121 (DHEK…LGLT), and 122–157 (ISEQ…NPVT). Positions 32, 34, 36, 38, 43, 68, 70, 72, 74, 79, 99, 101, 103, 105, 110, 135, 137, 139, 141, and 146 each coordinate Ca(2+). The tract at residues 159–168 (IEEIIRFWKH) is linker region. The tract at residues 174 to 477 (IGDSLTIPDE…MKQTLGVTQK (304 aa)) is C-terminal transmembrane transporter domain. 3 Solcar repeats span residues 192–278 (GQWW…YKKL), 286–371 (IGTF…LKSY), and 383–471 (PGVM…MKQT). Residues 198 to 215 (LLAGGIAGAVSRTSTAPL) traverse the membrane as a helical segment. Residues 216–252 (DRLKIMMQVHGSKSDKMNIFGGFRQMVKEGGIRSLWR) lie on the Mitochondrial matrix side of the membrane. A helical membrane pass occupies residues 253–272 (GNGTNVIKIAPETAVKFWAY). Residues 273–295 (EQYKKLLTEEGQKIGTFERFISG) are Mitochondrial intermembrane-facing. Residues 296–309 (SMAGATAQTFIYPM) form a helical membrane-spanning segment. Residues 310–345 (EVMKTRLAVGKTGQYSGIYDCAKKILKHEGLGAFYK) are Mitochondrial matrix-facing. Residue lysine 320 is modified to N6-acetyllysine; alternate. Position 320 is an N6-succinyllysine; alternate (lysine 320). At lysine 336 the chain carries N6-acetyllysine. Residues 346 to 365 (GYVPNLLGIIPYAGIDLAVY) traverse the membrane as a helical segment. Residues 366-388 (ELLKSYWLDNFAKDSVNPGVMVL) are Mitochondrial intermembrane-facing. The helical transmembrane segment at 389-406 (LGCGALSSTCGQLASYPL) threads the bilayer. At 407–445 (ALVRTRMQAQAMLEGSPQLNMVGLFRRIISKEGIPGLYR) the chain is on the mitochondrial matrix side. Lysine 437 is subject to N6-acetyllysine; alternate. Lysine 437 carries the post-translational modification N6-succinyllysine; alternate. The chain crosses the membrane as a helical span at residues 446 to 465 (GITPNFMKVLPAVGISYVVY). Topologically, residues 466–477 (ENMKQTLGVTQK) are mitochondrial intermembrane.

The protein belongs to the mitochondrial carrier (TC 2.A.29) family. As to quaternary structure, monomer. Expressed in all tissues tested. Highly expressed in testis, expressed at intermediate level in small intestine and pancreas, and weakly expressed in kidney, spleen, liver, skeletal muscle and heart.

Its subcellular location is the mitochondrion inner membrane. The enzyme catalyses Mg(2+)(out) + phosphate(in) + ATP(out) = Mg(2+)(in) + phosphate(out) + ATP(in). It catalyses the reaction ADP(out) + phosphate(in) + H(+)(out) = ADP(in) + phosphate(out) + H(+)(in). The catalysed reaction is AMP(out) + phosphate(in) = AMP(in) + phosphate(out). It carries out the reaction phosphate(in) + ATP(out) + 2 H(+)(out) = phosphate(out) + ATP(in) + 2 H(+)(in). The enzyme catalyses dADP(in) + ADP(out) = dADP(out) + ADP(in). It catalyses the reaction Mg(2+)(in) + ADP(out) + ATP(in) + H(+)(out) = Mg(2+)(out) + ADP(in) + ATP(out) + H(+)(in). The catalysed reaction is ADP(out) + diphosphate(in) = ADP(in) + diphosphate(out). It carries out the reaction dAMP(in) + ADP(out) + H(+)(out) = dAMP(out) + ADP(in) + H(+)(in). The enzyme catalyses 3'-AMP(in) + ADP(out) + H(+)(out) = 3'-AMP(out) + ADP(in) + H(+)(in). It catalyses the reaction dAMP(out) + phosphate(in) = dAMP(in) + phosphate(out). The catalysed reaction is 3'-AMP(out) + phosphate(in) = 3'-AMP(in) + phosphate(out). It carries out the reaction dADP(out) + phosphate(in) + H(+)(out) = dADP(in) + phosphate(out) + H(+)(in). Its activity is regulated as follows. Activated by an increase in cytosolic calcium levels that induce a conformational change of the N-terminal regulatory domain, uncapping the channel and allowing transport. Inhibited by bathophenanthroline, mersalyl, p-hydroxymercuribenzoate, bromcresol purple and tannic acid. Its function is as follows. Electroneutral antiporter that mediates the transport of adenyl nucleotides through the inner mitochondrial membrane. Originally identified as an ATP-magnesium/inorganic phosphate antiporter, it also acts as a broad specificity adenyl nucleotide antiporter. By regulating the mitochondrial matrix adenyl nucleotide pool could adapt to changing cellular energetic demands and indirectly regulate adenyl nucleotide-dependent metabolic pathways. In vitro, a low activity is also observed with guanyl and pyrimidine nucleotides. May play a role in protecting cells against oxidative stress-induced cell death, by buffering calcium levels in the mitochondrial matrix through the formation of calcium-phosphate precipitates. The sequence is that of Mitochondrial adenyl nucleotide antiporter SLC25A24 from Homo sapiens (Human).